The primary structure comprises 344 residues: Ribosomal RNA large subunit methyltransferase Cfr (344 aa).

Glu90 functions as the Proton acceptor in the catalytic mechanism. Positions 97 to 330 constitute a Radical SAM core domain; that stretch reads KQGWESFCIS…ATVRTQFGSE (234 aa). Cys104 and Cys335 are joined by a disulfide. [4Fe-4S] cluster contacts are provided by Cys111, Cys115, and Cys118. S-adenosyl-L-methionine-binding positions include 157 to 158, Ser188, 211 to 213, and Asn292; these read GE and SLH. Cys335 serves as the catalytic S-methylcysteine intermediate.

Belongs to the radical SAM superfamily. RlmN family. Cfr subfamily. Requires [4Fe-4S] cluster as cofactor.

It localises to the cytoplasm. It carries out the reaction adenosine(2503) in 23S rRNA + 2 reduced [2Fe-2S]-[ferredoxin] + 2 S-adenosyl-L-methionine = 8-methyladenosine(2503) in 23S rRNA + 5'-deoxyadenosine + L-methionine + 2 oxidized [2Fe-2S]-[ferredoxin] + S-adenosyl-L-homocysteine. Functionally, specifically methylates position 8 of adenine 2503 in 23S rRNA. Confers resistance to some classes of antibiotics. In Clostridium botulinum (strain Langeland / NCTC 10281 / Type F), this protein is Ribosomal RNA large subunit methyltransferase Cfr.